The following is a 162-amino-acid chain: Protein LTO1 (162 aa).

Positions 17–53 (GFLEGQNENIKQSFLEGKQYGLQVGFQRFTLLGQMEG) are deca-GX3 motif; required for interaction with YAE1 and the CIA complex.

This sequence belongs to the LTO1 family. In terms of assembly, forms a complex with YAE1; the complex bridges the interaction between the CIA complex and RLI1. Associates with the CIA complex (via its C-terminal tryptophan).

It is found in the nucleus. In terms of biological role, essential for life in oxygen, but nonessential under anaerobic conditions. Required for biogenesis of the large ribosomal subunit and initiation of translation in oxygen. The complex LTO1:YAE1 functions as a target specific adapter that recruits apo-RLI1 to the cytosolic iron-sulfur protein assembly (CIA) complex machinery. The chain is Protein LTO1 from Saccharomyces cerevisiae (strain ATCC 204508 / S288c) (Baker's yeast).